Reading from the N-terminus, the 322-residue chain is Protein-methionine-sulfoxide reductase catalytic subunit MsrP (322 aa).

The tat-type signal signal peptide spans 1-59; sequence MSLRDALKTPSSEITDEAVYRDRRRLLQLFALTPALSVAGCAEADPPPPPKTVVTPAQA. Residues Asn79, 82 to 83, Cys137, Thr172, Asn220, Arg225, and 236 to 238 each bind Mo-molybdopterin; these read YE and SIK.

It belongs to the MsrP family. Heterodimer of a catalytic subunit (MsrP) and a heme-binding subunit (MsrQ). The cofactor is Mo-molybdopterin. In terms of processing, predicted to be exported by the Tat system. The position of the signal peptide cleavage has not been experimentally proven.

The protein localises to the periplasm. The catalysed reaction is L-methionyl-[protein] + a quinone + H2O = L-methionyl-(S)-S-oxide-[protein] + a quinol. It catalyses the reaction L-methionyl-[protein] + a quinone + H2O = L-methionyl-(R)-S-oxide-[protein] + a quinol. In terms of biological role, part of the MsrPQ system that repairs oxidized periplasmic proteins containing methionine sulfoxide residues (Met-O), using respiratory chain electrons. Thus protects these proteins from oxidative-stress damage caused by reactive species of oxygen and chlorine generated by the host defense mechanisms. MsrPQ is essential for the maintenance of envelope integrity under bleach stress, rescuing a wide series of structurally unrelated periplasmic proteins from methionine oxidation. The catalytic subunit MsrP is non-stereospecific, being able to reduce both (R-) and (S-) diastereoisomers of methionine sulfoxide. The protein is Protein-methionine-sulfoxide reductase catalytic subunit MsrP of Xanthomonas campestris pv. campestris (strain ATCC 33913 / DSM 3586 / NCPPB 528 / LMG 568 / P 25).